An 87-amino-acid chain; its full sequence is Large ribosomal subunit protein bL31B (87 aa).

This sequence belongs to the bacterial ribosomal protein bL31 family. Type B subfamily. In terms of assembly, part of the 50S ribosomal subunit.

This chain is Large ribosomal subunit protein bL31B, found in Halorhodospira halophila (strain DSM 244 / SL1) (Ectothiorhodospira halophila (strain DSM 244 / SL1)).